Consider the following 199-residue polypeptide: Casparian strip membrane protein 2 (199 aa).

The Cytoplasmic segment spans residues 1–37; that stretch reads MMRGSTEIDMPESSSVSKGTAPLIAAPMKEKGGYKKG. Residues 38 to 58 traverse the membrane as a helical segment; the sequence is IAIFDFILRLAAIATALAAAA. Topologically, residues 59–87 are extracellular; the sequence is SMGTSDETLPFFTQFFQFQASYDDLPTFQ. A helical membrane pass occupies residues 88–108; that stretch reads FFVIAMAIVAGYLVLSLPFSI. Residues 109–120 are Cytoplasmic-facing; sequence VAIVRPHAAGPR. Residues 121–141 form a helical membrane-spanning segment; it reads LLLIILDTVALTLNTAAGAAA. The Extracellular segment spans residues 142-173; it reads AAIVYLAHNGNSSTNWLAICQQFGDFCQKNSG. N-linked (GlcNAc...) asparagine glycosylation occurs at Asn152. A helical transmembrane segment spans residues 174-194; the sequence is AVVASFITVVIFVFLLVLSAF. At 195–199 the chain is on the cytoplasmic side; the sequence is ALRRH.

This sequence belongs to the Casparian strip membrane proteins (CASP) family. Homodimer and heterodimers.

The protein localises to the cell membrane. In terms of biological role, regulates membrane-cell wall junctions and localized cell wall deposition. Required for establishment of the Casparian strip membrane domain (CSD) and the subsequent formation of Casparian strips, a cell wall modification of the root endodermis that determines an apoplastic barrier between the intraorganismal apoplasm and the extraorganismal apoplasm and prevents lateral diffusion. The polypeptide is Casparian strip membrane protein 2 (Populus trichocarpa (Western balsam poplar)).